The sequence spans 600 residues: Zinc metalloproteinase-disintegrin-like cobrin (600 aa).

The N-terminal stretch at 1–8 (MIQLSWSS) is a signal peptide. Residues 9–179 (IILESGNVND…DEPIKKTSLL (171 aa)) constitute a propeptide that is removed on maturation. The 196-residue stretch at 193-388 (KYIEFYMVVD…DRPQCILNKP (196 aa)) folds into the Peptidase M12B domain. 2 residues coordinate Ca(2+): E196 and D280. 3 disulfides stabilise this stretch: C304–C383, C344–C367, and C346–C351. The Zn(2+) site is built by H329, H333, and H339. The Ca(2+) site is built by C383, N386, I398, N401, F403, E405, E408, and D411. Residues 396 to 482 (PPICGNYFVE…ECPTDVFQRN (87 aa)) enclose the Disintegrin domain. 14 cysteine pairs are disulfide-bonded: C399–C428, C410–C423, C412–C418, C422–C445, C436–C442, C441–C467, C454–C474, C461–C492, C486–C497, C504–C554, C519–C562, C532–C542, C549–C588, and C582–C593. Residue N424 is glycosylated (N-linked (GlcNAc...) asparagine). A D/ECD-tripeptide motif is present at residues 460–462 (DCD). Residues D462, L463, E465, D477, and V478 each coordinate Ca(2+).

The protein belongs to the venom metalloproteinase (M12B) family. P-III subfamily. P-IIIa sub-subfamily. In terms of assembly, monomer. Zn(2+) serves as cofactor. As to expression, expressed by the venom gland.

The protein localises to the secreted. Functionally, snake venom zinc metalloproteinase that may cleave complement protein C3 into C3c-like (C3o). In Naja kaouthia (Monocled cobra), this protein is Zinc metalloproteinase-disintegrin-like cobrin.